Here is a 1032-residue protein sequence, read N- to C-terminus: Reticulon-3 (1032 aa).

Residues 1 to 24 (MAEPSAATQSHSISSSSFGAEPSA) are compositionally biased toward low complexity. The disordered stretch occupies residues 1-61 (MAEPSAATQS…SSSSSQPVSL (61 aa)). At Ala2 the chain carries N-acetylalanine. Residues 2 to 863 (AEPSAATQSH…KKTGFVFGTT (862 aa)) are Cytoplasmic-facing. A Phosphoserine modification is found at Ser30. A compositionally biased stretch (low complexity) spans 32–61 (GACPALGTKSCSSSCADSFVSSSSSQPVSL). Phosphoserine occurs at positions 229, 243, 246, 283, 316, and 453. The span at 545-568 (CEREEKTSKNFEELVSDSELHQDQ) shows a compositional bias: basic and acidic residues. Residues 545–617 (CEREEKTSKN…NPKLPSTVSP (73 aa)) form a disordered region. Residues 605–617 (TTENPKLPSTVSP) are compositionally biased toward polar residues. Ser649 and Ser650 each carry phosphoserine. A compositionally biased stretch (basic and acidic residues) spans 696–715 (NESGGSEIKDIGSKYSEQSK). The disordered stretch occupies residues 696–726 (NESGGSEIKDIGSKYSEQSKETNGSEPLGVF). Ser735 carries the post-translational modification Phosphoserine. The Reticulon domain maps to 844-1032 (VHDLIFWRDV…LPGIAKKKAE (189 aa)). An intramembrane region (helical) is located at residues 864–887 (LIMLLSLAAFSVISVVSYLILALL). Topologically, residues 888-947 (SVTISFRIYKSVIQAVQKSEEGHPFKAYLDVDITLSSEAFHNYMNAAMVHINRALKLIIR) are cytoplasmic. The segment at residues 948–968 (LFLVEDLVDSLKLAVFMWLMT) is an intramembrane region (helical). Residues 969-972 (YVGA) lie on the Cytoplasmic side of the membrane. Positions 973-993 (VFNGITLLILAELLIFSVPIV) form an intramembrane region, helical. The interaction with FADD stretch occupies residues 987 to 1032 (IFSVPIVYEKYKTQIDHYVGIARDQTKSIVEKIQAKLPGIAKKKAE). Topologically, residues 994-1032 (YEKYKTQIDHYVGIARDQTKSIVEKIQAKLPGIAKKKAE) are cytoplasmic. Positions 1000–1002 (QID) are interaction with BACE1.

As to quaternary structure, homodimer. Interacts with ATL1. Interacts with RTN4. Isoform 3 interacts with BACE1, BACE2, BCL2 and FADD. Interacts with ATL2. Interacts with TMEM33. Interacts with ZFYVE27 and with KIF5A in a ZFYVE27-dependent manner. Interacts with RIGI. Interacts with TRIM25. In terms of assembly, (Microbial infection) Interacts with Coxsackievirus A16, enterovirus 71 and poliovirus P2C proteins. (Microbial infection) Interacts with West Nile virus protein NS4A. Isoform 3 is widely expressed, with highest levels in brain, where it is enriched in neuronal cell bodies from gray matter (at protein level). Three times more abundant in macula than in peripheral retina. Isoform 1 is expressed at high levels in brain and at low levels in skeletal muscle. Isoform 2 is only found in melanoma.

Its subcellular location is the endoplasmic reticulum membrane. It localises to the golgi apparatus membrane. Its function is as follows. May be involved in membrane trafficking in the early secretory pathway. Inhibits BACE1 activity and amyloid precursor protein processing. May induce caspase-8 cascade and apoptosis. May favor BCL2 translocation to the mitochondria upon endoplasmic reticulum stress. Induces the formation of endoplasmic reticulum tubules. Also acts as an inflammation-resolving regulator by interacting with both TRIM25 and RIGI, subsequently impairing RIGI 'Lys-63'-linked polyubiquitination leading to IRF3 and NF-kappa-B inhibition. In terms of biological role, (Microbial infection) Plays a positive role in viral replication and pathogenesis of enteroviruses. The chain is Reticulon-3 (RTN3) from Homo sapiens (Human).